The primary structure comprises 280 residues: Phosphonates import ATP-binding protein PhnC (280 aa).

The 244-residue stretch at 2–245 (FELKNVTRRF…AVKEIYGTDK (244 aa)) folds into the ABC transporter domain. Residue 34-41 (GRSGAGKS) coordinates ATP. The interval 257 to 280 (TSLESKRRAEDVSSGRVAKAAAVH) is disordered. Positions 260 to 269 (ESKRRAEDVS) are enriched in basic and acidic residues.

It belongs to the ABC transporter superfamily. Phosphonates importer (TC 3.A.1.9.1) family. The complex is composed of two ATP-binding proteins (PhnC), two transmembrane proteins (PhnE) and a solute-binding protein (PhnD).

It localises to the cell inner membrane. The enzyme catalyses phosphonate(out) + ATP + H2O = phosphonate(in) + ADP + phosphate + H(+). Its function is as follows. Part of the ABC transporter complex PhnCDE involved in phosphonates import. Responsible for energy coupling to the transport system. This is Phosphonates import ATP-binding protein PhnC from Rhizobium johnstonii (strain DSM 114642 / LMG 32736 / 3841) (Rhizobium leguminosarum bv. viciae).